The chain runs to 105 residues: ATP synthase F(0) complex subunit a (105 aa).

3 helical membrane-spanning segments follow: residues Glu14 to Ile34, Leu47 to Met67, and Ala72 to Ile92.

The protein belongs to the ATPase A chain family. In terms of assembly, component of the ATP synthase complex composed at least of ATP5F1A/subunit alpha, ATP5F1B/subunit beta, ATP5MC1/subunit c (homooctomer), MT-ATP6/subunit a, MT-ATP8/subunit 8, ATP5ME/subunit e, ATP5MF/subunit f, ATP5MG/subunit g, ATP5MK/subunit k, ATP5MJ/subunit j, ATP5F1C/subunit gamma, ATP5F1D/subunit delta, ATP5F1E/subunit epsilon, ATP5PF/subunit F6, ATP5PB/subunit b, ATP5PD/subunit d, ATP5PO/subunit OSCP. ATP synthase complex consists of a soluble F(1) head domain (subunits alpha(3) and beta(3)) - the catalytic core - and a membrane F(0) domain - the membrane proton channel (subunits c, a, 8, e, f, g, k and j). These two domains are linked by a central stalk (subunits gamma, delta, and epsilon) rotating inside the F1 region and a stationary peripheral stalk (subunits F6, b, d, and OSCP). Interacts with DNAJC30; interaction is direct.

It is found in the mitochondrion inner membrane. The catalysed reaction is H(+)(in) = H(+)(out). Functionally, subunit a, of the mitochondrial membrane ATP synthase complex (F(1)F(0) ATP synthase or Complex V) that produces ATP from ADP in the presence of a proton gradient across the membrane which is generated by electron transport complexes of the respiratory chain. ATP synthase complex consist of a soluble F(1) head domain - the catalytic core - and a membrane F(1) domain - the membrane proton channel. These two domains are linked by a central stalk rotating inside the F(1) region and a stationary peripheral stalk. During catalysis, ATP synthesis in the catalytic domain of F(1) is coupled via a rotary mechanism of the central stalk subunits to proton translocation. With the subunit c (ATP5MC1), forms the proton-conducting channel in the F(0) domain, that contains two crucial half-channels (inlet and outlet) that facilitate proton movement from the mitochondrial intermembrane space (IMS) into the matrix. Protons are taken up via the inlet half-channel and released through the outlet half-channel, following a Grotthuss mechanism. The protein is ATP synthase F(0) complex subunit a of Salmo trutta (Brown trout).